A 433-amino-acid polypeptide reads, in one-letter code: Glutamate-1-semialdehyde 2,1-aminomutase (433 aa).

An N6-(pyridoxal phosphate)lysine modification is found at lysine 272.

The protein belongs to the class-III pyridoxal-phosphate-dependent aminotransferase family. HemL subfamily. As to quaternary structure, homodimer. Pyridoxal 5'-phosphate serves as cofactor.

It localises to the cytoplasm. The enzyme catalyses (S)-4-amino-5-oxopentanoate = 5-aminolevulinate. Its pathway is porphyrin-containing compound metabolism; protoporphyrin-IX biosynthesis; 5-aminolevulinate from L-glutamyl-tRNA(Glu): step 2/2. The protein operates within porphyrin-containing compound metabolism; chlorophyll biosynthesis. This is Glutamate-1-semialdehyde 2,1-aminomutase from Synechococcus sp. (strain WH7803).